A 295-amino-acid polypeptide reads, in one-letter code: Pyridoxal 5'-phosphate synthase subunit PdxS (295 aa).

Aspartate 25 is a D-ribose 5-phosphate binding site. Residue lysine 82 is the Schiff-base intermediate with D-ribose 5-phosphate of the active site. D-ribose 5-phosphate is bound at residue glycine 154. Arginine 166 serves as a coordination point for D-glyceraldehyde 3-phosphate. Residues glycine 215 and 236-237 (GS) each bind D-ribose 5-phosphate.

It belongs to the PdxS/SNZ family. In the presence of PdxT, forms a dodecamer of heterodimers.

It carries out the reaction aldehydo-D-ribose 5-phosphate + D-glyceraldehyde 3-phosphate + L-glutamine = pyridoxal 5'-phosphate + L-glutamate + phosphate + 3 H2O + H(+). The protein operates within cofactor biosynthesis; pyridoxal 5'-phosphate biosynthesis. Functionally, catalyzes the formation of pyridoxal 5'-phosphate from ribose 5-phosphate (RBP), glyceraldehyde 3-phosphate (G3P) and ammonia. The ammonia is provided by the PdxT subunit. Can also use ribulose 5-phosphate and dihydroxyacetone phosphate as substrates, resulting from enzyme-catalyzed isomerization of RBP and G3P, respectively. In Actinobacillus pleuropneumoniae serotype 5b (strain L20), this protein is Pyridoxal 5'-phosphate synthase subunit PdxS.